The chain runs to 336 residues: Probable aquaglyceroporin-2 (336 aa).

The tract at residues 1 to 46 (MPISTINDSISESSVHKSSIPTKVEMSQNEKYSEAPSEAPTIPPPP) is disordered. Residues 1–64 (MPISTINDSI…RENCQDAFSE (64 aa)) are Cytoplasmic-facing. Residues 9–19 (SISESSVHKSS) show a composition bias toward low complexity. The helical transmembrane segment at 65–85 (FFGTFVLLLFGDGVVAQVVLS) threads the bilayer. The Extracellular portion of the chain corresponds to 86 to 94 (RGTKGDYQS). A helical transmembrane segment spans residues 95–115 (ISWGWGLGVMLGVYVGGKSGG). The Cytoplasmic segment spans residues 116 to 135 (HLNPAVTLANCLFRGHPWRK). An NPA 1 motif is present at residues 118–120 (NPA). A helical transmembrane segment spans residues 136–156 (FPIYAVAQVLGAMAAAAVVYG). Residues 157–195 (NYKSAIDAYEGGPGIRTVIGENATAGVFCTYPAEFMTRT) are Extracellular-facing. Residue Asn-178 is glycosylated (N-linked (GlcNAc...) asparagine). The chain crosses the membrane as a helical span at residues 196–216 (GMFFSEFIASTILQFVIFAMA). Residues 217–223 (DSANIGA) are Cytoplasmic-facing. The helical transmembrane segment at 224-244 (GPLMPLGLFFLIFGIGACFGW) threads the bilayer. The Extracellular segment spans residues 245–280 (ETGYAINLARDFGPRLVSYMLGYGSEVWSAGGYYFW). The NPA 2 motif lies at 251-253 (NLA). The helical transmembrane segment at 281–301 (IPMVAPFFGCAFGGFLYDVFI) threads the bilayer. Residues 302-336 (YTGPSPINTPGMGFGRLVSPRRSTWSNTYNANSPV) are Cytoplasmic-facing.

Belongs to the MIP/aquaporin (TC 1.A.8) family.

Its subcellular location is the membrane. The catalysed reaction is H2O(in) = H2O(out). The enzyme catalyses glycerol(in) = glycerol(out). In terms of biological role, probable water/glycerol channel that may have redundant functions with FgAQP4. The sequence is that of Probable aquaglyceroporin-2 from Gibberella zeae (strain ATCC MYA-4620 / CBS 123657 / FGSC 9075 / NRRL 31084 / PH-1) (Wheat head blight fungus).